The chain runs to 168 residues: Protein archease (168 aa).

The residue at position 2 (A2) is an N-acetylalanine. Residues D39, D167, and I168 each coordinate Ca(2+).

It belongs to the archease family. As to quaternary structure, component of the tRNA-splicing ligase complex.

Its function is as follows. Component of the tRNA-splicing ligase complex required to facilitate the enzymatic turnover of catalytic subunit RTCB. Together with DDX1, acts by facilitating the guanylylation of RTCB, a key intermediate step in tRNA ligation. This Mus musculus (Mouse) protein is Protein archease (Zbtb8os).